The primary structure comprises 131 residues: Thrombocorticin (131 aa).

Residues C3 and C111 are joined by a disulfide bond. The disordered stretch occupies residues 28-60 (RNESVEVKDSNGNTVSRGSGSSSSGGTFTVINM). Positions 37 to 54 (SNGNTVSRGSGSSSSGGT) are enriched in low complexity. The Pseudodomain-swapping motif motif lies at 117 to 131 (DFNDVFVLITGLVRG).

Its function is as follows. Binds to fucose and mannose in a calcium-dependent manner (in vitro). Acts as an agonist for human thrombopoietin receptor MPL (in vitro). Binding of sugar-moieties may promote the interaction with human MPL on the cell surface (in vitro). Catalyzes MPL dimerization and activation, and modulates internalization of the receptor (in vitro). Exhibits proliferation activity in murine recombinant Ba/F3 cells expressing human MPL (Ba/F3-huMPL) (in vitro). Induces phosphorylation of STAT5 in recombinant Ba/F3-huMPL cells, possibly by stimulating MPL on the cell surface to transduce signals via Jak/STAT signaling pathway (in vitro). Does not aggregate rabbit erythrocytes, indicating absent lectin-like agglutination activity (in vitro). This Corticium sp. (Marine sponge) protein is Thrombocorticin.